The chain runs to 674 residues: MRGCLQPARWLTTATLRRPLLSCPRQLPTRYNPFPRPFHHAPVLQARQPSKPLSLVEERIDAIPIERYRNFCIVAHVDHGKSTLSDRLLELTGTIKPGENKQVLDKLDVERERGITVKAQTCTMLYNHRGKDYLLHLIDTPGHVDFRTEVSRSYASCGGALLLVDASQGVQAQTVANFYLAFAQGLTLVPVINKVDLPSADPERALEQMKTTFELDVDKAVRVSAKTGLNVQELLPAIIESIPALLLVDSWYSTYKGVIILTRVFDGEVKAGDQLVSFATGLKYTVGEVGIMYPSQTPQSVLRAGQVGYIYFNPGMKRSQEAKIGDTFTKVGCESLVEPLPGFEEPKSMVFVAAYPVDSNDFHHLEESINQLLLNDRSVTMQKESSEALGAGFRLGFLGTLHCSVFEDRLRQEHGASIILTPPTVPCKVIWKDGKETIFTNPSRFPDEDTLRVKVAELQEPYVLATITFPEEYLGRVMELCEANRGEQVSMEFFTATQVILKYQLPLAQLVDDFFGKLKGSTKGYASIDYEESEWRKSNVVKLQLLVNKTPVDAVSRIVHSSQANRLGRQWVTKFKEHVERQMFEVIIQAAVGRNVLARETIKPYRKDVLAKLHASDITRRKKLLEKQKEGRKRLKAVDSAMVAIFLARVPVNNGGSKDLFVWVWMGVWIPRQL.

The transit peptide at 1-48 (MRGCLQPARWLTTATLRRPLLSCPRQLPTRYNPFPRPFHHAPVLQARQ) directs the protein to the mitochondrion. Residues 66–246 (ERYRNFCIVA…AIIESIPALL (181 aa)) enclose the tr-type G domain. Residues 75–82 (AHVDHGKS), 139–143 (DTPGH), and 193–196 (NKVD) each bind GTP.

It belongs to the TRAFAC class translation factor GTPase superfamily. Classic translation factor GTPase family. LepA subfamily.

It localises to the mitochondrion inner membrane. It carries out the reaction GTP + H2O = GDP + phosphate + H(+). In terms of biological role, promotes mitochondrial protein synthesis. May act as a fidelity factor of the translation reaction, by catalyzing a one-codon backward translocation of tRNAs on improperly translocated ribosomes. Binds to mitochondrial ribosomes in a GTP-dependent manner. The sequence is that of Translation factor GUF1, mitochondrial from Arthroderma otae (strain ATCC MYA-4605 / CBS 113480) (Microsporum canis).